The primary structure comprises 303 residues: Protoheme IX farnesyltransferase (303 aa).

A run of 7 helical transmembrane segments spans residues Met-25–Leu-45, Ile-54–Leu-74, Leu-118–Val-138, Trp-151–Ile-171, Leu-177–Leu-197, Leu-230–Leu-250, and Phe-280–Ile-300.

It belongs to the UbiA prenyltransferase family. Protoheme IX farnesyltransferase subfamily. Interacts with CtaA.

The protein resides in the cell membrane. The catalysed reaction is heme b + (2E,6E)-farnesyl diphosphate + H2O = Fe(II)-heme o + diphosphate. It participates in porphyrin-containing compound metabolism; heme O biosynthesis; heme O from protoheme: step 1/1. Converts heme B (protoheme IX) to heme O by substitution of the vinyl group on carbon 2 of heme B porphyrin ring with a hydroxyethyl farnesyl side group. This chain is Protoheme IX farnesyltransferase, found in Staphylococcus saprophyticus subsp. saprophyticus (strain ATCC 15305 / DSM 20229 / NCIMB 8711 / NCTC 7292 / S-41).